The primary structure comprises 154 residues: Myoglobin (154 aa).

The region spanning 2–148 is the Globin domain; it reads GLSDGEWQLV…FRNDMAAQYK (147 aa). Phosphoserine is present on Ser-4. His-65 contributes to the nitrite binding site. His-65 is an O2 binding site. Phosphothreonine is present on Thr-68. His-94 contributes to the heme b binding site.

The protein belongs to the globin family. Monomeric.

Its subcellular location is the cytoplasm. It localises to the sarcoplasm. It carries out the reaction Fe(III)-heme b-[protein] + nitric oxide + H2O = Fe(II)-heme b-[protein] + nitrite + 2 H(+). It catalyses the reaction H2O2 + AH2 = A + 2 H2O. In terms of biological role, monomeric heme protein which primary function is to store oxygen and facilitate its diffusion within muscle tissues. Reversibly binds oxygen through a pentacoordinated heme iron and enables its timely and efficient release as needed during periods of heightened demand. Depending on the oxidative conditions of tissues and cells, and in addition to its ability to bind oxygen, it also has a nitrite reductase activity whereby it regulates the production of bioactive nitric oxide. Under stress conditions, like hypoxia and anoxia, it also protects cells against reactive oxygen species thanks to its pseudoperoxidase activity. This Cervus elaphus (Red deer) protein is Myoglobin (MB).